We begin with the raw amino-acid sequence, 95 residues long: DNA-directed RNA polymerase subunit Rpo6 (95 aa).

Belongs to the archaeal Rpo6/eukaryotic RPB6 RNA polymerase subunit family. In terms of assembly, part of the RNA polymerase complex.

Its subcellular location is the cytoplasm. The enzyme catalyses RNA(n) + a ribonucleoside 5'-triphosphate = RNA(n+1) + diphosphate. In terms of biological role, DNA-dependent RNA polymerase (RNAP) catalyzes the transcription of DNA into RNA using the four ribonucleoside triphosphates as substrates. This Saccharolobus islandicus (strain M.16.27) (Sulfolobus islandicus) protein is DNA-directed RNA polymerase subunit Rpo6.